Here is a 316-residue protein sequence, read N- to C-terminus: Lys-63-specific deubiquitinase BRCC36 (316 aa).

A2 carries the N-acetylalanine modification. The region spanning 12–179 (VHLESDAFLV…YTCFQSIQAQ (168 aa)) is the MPN domain. Zn(2+) contacts are provided by H122, H124, and D135. A JAMM motif motif is present at residues 122 to 135 (HSHPHITVWPSHVD). S258 is modified (phosphoserine).

It belongs to the peptidase M67A family. BRCC36 subfamily. As to quaternary structure, component of the ARISC complex, at least composed of UIMC1/RAP80, ABRAXAS1, BRCC3/BRCC36, BABAM2 and BABAM1/NBA1. Component of the BRCA1-A complex, at least composed of BRCA1, BARD1, UIMC1/RAP80, ABRAXAS1, BRCC3/BRCC36, babam2 and BABAM1/NBA1. In the BRCA1-A complex, interacts directly with ABRAXAS1 and babam2. Component of the BRISC complex, at least composed of ABRAXAS2, BRCC3/BRCC36, BABAM2 and BABAM1/NBA1. Identified in a complex with SHMT2 and the other subunits of the BRISC complex. In the BRISC complex, interacts directly with ABRAXAS2. Identified in a complex with ABRAXAS2 and NUMA1. The BRISC complex interacts with the CSN complex. Component of the BRCA1/BRCA2 containing complex (BRCC), which also contains BRCA1, BRCA2, BARD1, BABAM2 and RAD51. BRCC is a ubiquitin E3 ligase complex that enhances cellular survival following DNA damage. Interacts with BRCA1. Binds polyubiquitin. Interacts with PWWP2B. Interacts with HDAC1; this interaction is enhanced in the presence of PWWP2B. Requires Zn(2+) as cofactor. Heart, brain, placenta, lung, liver, skeletal muscle, kidney and pancreas. Aberrantly expressed in the vast majority of breast tumors.

It is found in the nucleus. It localises to the cytoplasm. The protein localises to the cytoskeleton. The protein resides in the spindle pole. Metalloprotease that specifically cleaves 'Lys-63'-linked polyubiquitin chains. Does not have activity toward 'Lys-48'-linked polyubiquitin chains. Component of the BRCA1-A complex, a complex that specifically recognizes 'Lys-63'-linked ubiquitinated histones H2A and H2AX at DNA lesions sites, leading to target the BRCA1-BARD1 heterodimer to sites of DNA damage at double-strand breaks (DSBs). In the BRCA1-A complex, it specifically removes 'Lys-63'-linked ubiquitin on histones H2A and H2AX, antagonizing the RNF8-dependent ubiquitination at double-strand breaks (DSBs). Catalytic subunit of the BRISC complex, a multiprotein complex that specifically cleaves 'Lys-63'-linked ubiquitin in various substrates. Mediates the specific 'Lys-63'-specific deubiquitination associated with the COP9 signalosome complex (CSN), via the interaction of the BRISC complex with the CSN complex. The BRISC complex is required for normal mitotic spindle assembly and microtubule attachment to kinetochores via its role in deubiquitinating NUMA1. Plays a role in interferon signaling via its role in the deubiquitination of the interferon receptor IFNAR1; deubiquitination increases IFNAR1 activity by enhancing its stability and cell surface expression. Acts as a regulator of the NLRP3 inflammasome by mediating deubiquitination of NLRP3, leading to NLRP3 inflammasome assembly. Down-regulates the response to bacterial lipopolysaccharide (LPS) via its role in IFNAR1 deubiquitination. Deubiquitinates HDAC1 and PWWP2B leading to their stabilization. This chain is Lys-63-specific deubiquitinase BRCC36 (BRCC3), found in Homo sapiens (Human).